A 274-amino-acid polypeptide reads, in one-letter code: Large ribosomal subunit protein uL2 (274 aa).

Residues 223 to 256 are disordered; sequence VVMNPVDHPHGGGEGKTGEGRHPVDPWGNLTKGY. Residues 229–246 show a composition bias toward basic and acidic residues; that stretch reads DHPHGGGEGKTGEGRHPV.

The protein belongs to the universal ribosomal protein uL2 family. In terms of assembly, part of the 50S ribosomal subunit. Forms a bridge to the 30S subunit in the 70S ribosome.

In terms of biological role, one of the primary rRNA binding proteins. Required for association of the 30S and 50S subunits to form the 70S ribosome, for tRNA binding and peptide bond formation. It has been suggested to have peptidyltransferase activity; this is somewhat controversial. Makes several contacts with the 16S rRNA in the 70S ribosome. This is Large ribosomal subunit protein uL2 from Albidiferax ferrireducens (strain ATCC BAA-621 / DSM 15236 / T118) (Rhodoferax ferrireducens).